Consider the following 477-residue polypeptide: AAA-ATPase At3g28600 (477 aa).

Positions 1-26 (MMMGNTFGSSLASLFFLWATIQQIFP) are cleaved as a signal peptide. 245 to 252 (GPPGTGKS) is a binding site for ATP.

It belongs to the AAA ATPase family. BCS1 subfamily. Mg(2+) serves as cofactor.

The enzyme catalyses ATP + H2O = ADP + phosphate + H(+). The sequence is that of AAA-ATPase At3g28600 from Arabidopsis thaliana (Mouse-ear cress).